The following is a 254-amino-acid chain: 3-deoxy-manno-octulosonate cytidylyltransferase (254 aa).

Belongs to the KdsB family.

It is found in the cytoplasm. It carries out the reaction 3-deoxy-alpha-D-manno-oct-2-ulosonate + CTP = CMP-3-deoxy-beta-D-manno-octulosonate + diphosphate. It functions in the pathway nucleotide-sugar biosynthesis; CMP-3-deoxy-D-manno-octulosonate biosynthesis; CMP-3-deoxy-D-manno-octulosonate from 3-deoxy-D-manno-octulosonate and CTP: step 1/1. Its pathway is bacterial outer membrane biogenesis; lipopolysaccharide biosynthesis. Activates KDO (a required 8-carbon sugar) for incorporation into bacterial lipopolysaccharide in Gram-negative bacteria. The protein is 3-deoxy-manno-octulosonate cytidylyltransferase of Haemophilus influenzae (strain PittEE).